The sequence spans 96 residues: Small ribosomal subunit protein bS6 (96 aa).

The protein belongs to the bacterial ribosomal protein bS6 family.

In terms of biological role, binds together with bS18 to 16S ribosomal RNA. The polypeptide is Small ribosomal subunit protein bS6 (Salinispora tropica (strain ATCC BAA-916 / DSM 44818 / JCM 13857 / NBRC 105044 / CNB-440)).